A 407-amino-acid polypeptide reads, in one-letter code: Phosphopentomutase (407 aa).

Aspartate 10, aspartate 306, histidine 311, aspartate 347, histidine 348, and histidine 359 together coordinate Mn(2+).

This sequence belongs to the phosphopentomutase family. Mn(2+) serves as cofactor.

The protein localises to the cytoplasm. The catalysed reaction is 2-deoxy-alpha-D-ribose 1-phosphate = 2-deoxy-D-ribose 5-phosphate. The enzyme catalyses alpha-D-ribose 1-phosphate = D-ribose 5-phosphate. The protein operates within carbohydrate degradation; 2-deoxy-D-ribose 1-phosphate degradation; D-glyceraldehyde 3-phosphate and acetaldehyde from 2-deoxy-alpha-D-ribose 1-phosphate: step 1/2. Isomerase that catalyzes the conversion of deoxy-ribose 1-phosphate (dRib-1-P) and ribose 1-phosphate (Rib-1-P) to deoxy-ribose 5-phosphate (dRib-5-P) and ribose 5-phosphate (Rib-5-P), respectively. In Yersinia pseudotuberculosis serotype O:1b (strain IP 31758), this protein is Phosphopentomutase.